We begin with the raw amino-acid sequence, 61 residues long: Large ribosomal subunit protein uL29 (61 aa).

This sequence belongs to the universal ribosomal protein uL29 family.

The protein is Large ribosomal subunit protein uL29 of Campylobacter jejuni subsp. jejuni serotype O:6 (strain 81116 / NCTC 11828).